Reading from the N-terminus, the 473-residue chain is Keratin, type I cytoskeletal 16 (473 aa).

The tract at residues 1–116 is head; that stretch reads MTTCSRQFTS…AGGDGLLVGS (116 aa). Residues 117-152 form a coil 1A region; the sequence is EKVTMQNLNDRLASYLDKVRALEEANADLEVKIRDW. The region spanning 117 to 428 is the IF rod domain; that stretch reads EKVTMQNLND…RLLEGEDAHL (312 aa). The interval 153 to 170 is linker 1; sequence YQRQRPSEIKDYSPYFKT. A coil 1B region spans residues 171 to 262; sequence IEDLRNKIIA…KNHEEEMLAL (92 aa). Positions 263–285 are linker 12; the sequence is RGQTGGDVNVEMDAAPGVDLSRI. Residues 286–424 form a coil 2 region; that stretch reads LNEMRDQYEQ…ATYRRLLEGE (139 aa). The interval 425-473 is tail; that stretch reads DAHLSSQQASGQSYSSREVFTSSSSSSSRQTRPILKEQSSSSFSQGQSS. A disordered region spans residues 428-473; sequence LSSQQASGQSYSSREVFTSSSSSSSRQTRPILKEQSSSSFSQGQSS. Composition is skewed to low complexity over residues 429–452 and 462–473; these read SSQQ…SSSS and QSSSSFSQGQSS.

The protein belongs to the intermediate filament family. In terms of assembly, heterodimer of a type I and a type II keratin. KRT16 associates with KRT6 isomers (KRT6A or KRT6B). Interacts with TCHP. Interacts with TRADD. In terms of tissue distribution, expressed in the corneal epithelium (at protein level).

Functionally, epidermis-specific type I keratin that plays a key role in skin. Acts as a regulator of innate immunity in response to skin barrier breach: required for some inflammatory checkpoint for the skin barrier maintenance. The polypeptide is Keratin, type I cytoskeletal 16 (KRT16) (Homo sapiens (Human)).